Consider the following 316-residue polypeptide: Acetyl-coenzyme A carboxylase carboxyl transferase subunit alpha (316 aa).

Residues 40-293 enclose the CoA carboxyltransferase C-terminal domain; it reads LEKRSRDALR…GDLIAKTMKE (254 aa).

It belongs to the AccA family. In terms of assembly, acetyl-CoA carboxylase is a heterohexamer composed of biotin carboxyl carrier protein (AccB), biotin carboxylase (AccC) and two subunits each of ACCase subunit alpha (AccA) and ACCase subunit beta (AccD).

Its subcellular location is the cytoplasm. The catalysed reaction is N(6)-carboxybiotinyl-L-lysyl-[protein] + acetyl-CoA = N(6)-biotinyl-L-lysyl-[protein] + malonyl-CoA. The protein operates within lipid metabolism; malonyl-CoA biosynthesis; malonyl-CoA from acetyl-CoA: step 1/1. In terms of biological role, component of the acetyl coenzyme A carboxylase (ACC) complex. First, biotin carboxylase catalyzes the carboxylation of biotin on its carrier protein (BCCP) and then the CO(2) group is transferred by the carboxyltransferase to acetyl-CoA to form malonyl-CoA. This is Acetyl-coenzyme A carboxylase carboxyl transferase subunit alpha from Mesorhizobium japonicum (strain LMG 29417 / CECT 9101 / MAFF 303099) (Mesorhizobium loti (strain MAFF 303099)).